We begin with the raw amino-acid sequence, 431 residues long: Histidinol dehydrogenase (431 aa).

NAD(+) contacts are provided by Tyr-127, Gln-185, and Asn-208. Positions 234, 256, and 259 each coordinate substrate. Residues Gln-256 and His-259 each contribute to the Zn(2+) site. Active-site proton acceptor residues include Glu-323 and His-324. Substrate-binding residues include His-324, Asp-357, Glu-411, and His-416. Position 357 (Asp-357) interacts with Zn(2+). His-416 contacts Zn(2+).

The protein belongs to the histidinol dehydrogenase family. It depends on Zn(2+) as a cofactor.

It carries out the reaction L-histidinol + 2 NAD(+) + H2O = L-histidine + 2 NADH + 3 H(+). The protein operates within amino-acid biosynthesis; L-histidine biosynthesis; L-histidine from 5-phospho-alpha-D-ribose 1-diphosphate: step 9/9. Functionally, catalyzes the sequential NAD-dependent oxidations of L-histidinol to L-histidinaldehyde and then to L-histidine. The protein is Histidinol dehydrogenase of Vibrio parahaemolyticus serotype O3:K6 (strain RIMD 2210633).